The following is a 142-amino-acid chain: Baculoviral IAP repeat-containing protein 5 (142 aa).

The BIR repeat unit spans residues 18 to 88 (RVSTFKNWPF…KHSSGCAFLS (71 aa)). Residue Ser20 is modified to Phosphoserine; by AURKC. Position 23 is an N6-acetyllysine (Lys23). Thr34 is subject to Phosphothreonine; by CDK1 and CDK15. At Thr48 the chain carries Phosphothreonine; by CK2; in vitro. Cys57, Cys60, His77, and Cys84 together coordinate Zn(2+). Lys90, Lys110, Lys112, and Lys115 each carry N6-acetyllysine. Thr117 carries the post-translational modification Phosphothreonine; by AURKB.

The protein belongs to the IAP family. Monomer or homodimer. Exists as a homodimer in the apo state and as a monomer in the CPC-bound state. The monomer protects cells against apoptosis more efficiently than the dimer. Only the dimeric form is capable of enhancing tubulin stability in cells. When phosphorylated, interacts with LAMTOR5/HBXIP; the resulting complex binds pro-CASP9, as well as active CASP9, but much less efficiently. Component of the chromosomal passenger complex (CPC) composed of at least BIRC5/survivin, CDCA8/borealin, INCENP, AURKB or AURKC; in the complex forms a triple-helix bundle-based subcomplex with INCENP and CDCA8. Interacts with JTB. Interacts (via BIR domain) with histone H3 phosphorylated at 'Thr-3' (H3pT3). Interacts with EVI5. Interacts with GTP-bound RAN in both the S and M phases of the cell cycle. Interacts with USP9X. Interacts with tubulin. Interacts with BIRC2/c-IAP1. The monomeric form interacts with XIAP/BIRC4. Both the dimeric and monomeric form can interact with DIABLO/SMAC. Interacts with BIRC6/bruce. Interacts with FBXL7; this interaction facilitates the polyubiquitination and subsequent proteasomal degradation of BIRC5 by the SCF(FBXL7) E3 ubiquitin-protein ligase complex. Post-translationally, ubiquitinated by the Cul9-RING ubiquitin-protein ligase complex, leading to its degradation. Ubiquitination is required for centrosomal targeting. Deubiquitinated by USP35 or USP38; leading to stabilization. In terms of processing, in vitro phosphorylation at Thr-117 by AURKB prevents interaction with INCENP and localization to mitotic chromosomes. Phosphorylation at Thr-48 by CK2 is critical for its mitotic and anti-apoptotic activities. Phosphorylation at Thr-34 by CDK15 is critical for its anti-apoptotic activity. Phosphorylation at Ser-20 by AURKC is critical for regulation of proper chromosome alignment and segregation, and possibly cytokinesis. Expressed in spleen, lung, brain, heart, kidney and intestine (at protein level). Expressed in cochlea including the organ of Corti, the lateral wall, the interdental cells of the Limbus as well as in cells of the cochlear nerve and the spiral ganglions (at protein level). Also expressed in Schwann cells (at protein level). Not expressed in cells of the inner and outer sulcus or the Reissner's membrane (at protein level).

It is found in the cytoplasm. The protein localises to the nucleus. Its subcellular location is the chromosome. The protein resides in the centromere. It localises to the cytoskeleton. It is found in the spindle. The protein localises to the kinetochore. Its subcellular location is the midbody. Multitasking protein that has dual roles in promoting cell proliferation and preventing apoptosis. Component of a chromosome passage protein complex (CPC) which is essential for chromosome alignment and segregation during mitosis and cytokinesis. Acts as an important regulator of the localization of this complex; directs CPC movement to different locations from the inner centromere during prometaphase to midbody during cytokinesis and participates in the organization of the center spindle by associating with polymerized microtubules. Involved in the recruitment of CPC to centromeres during early mitosis via association with histone H3 phosphorylated at 'Thr-3' (H3pT3) during mitosis. The complex with RAN plays a role in mitotic spindle formation by serving as a physical scaffold to help deliver the RAN effector molecule TPX2 to microtubules. May counteract a default induction of apoptosis in G2/M phase. The acetylated form represses STAT3 transactivation of target gene promoters. May play a role in neoplasia. Inhibitor of CASP3 and CASP7. Essential for the maintenance of mitochondrial integrity and function. The sequence is that of Baculoviral IAP repeat-containing protein 5 from Cavia porcellus (Guinea pig).